The primary structure comprises 384 residues: MGERKGTNKYYPPDFDPAKHGSLNGYRNSHPLRERARKLSQGILIIRFEMPYNIWCDGCKNHIGMGVRYNAEKKKVGNYYTTPIYRFRMKCHLCVNYIEMQTDPASCDYVIVSGAQRKEERWDMQDNEQILTTEHEQKQRLETDSMFRLEHGVQDKAKLQRAAPSLSELQEVQSAWKDDFAINSLLRSKFREEKKQIKEEEERDQALLTKASLDLKLVPEVEEDKKIAALLKYRSLESYEQKQKKKRSEICNRSWFSPGVDSGQQAPGNTMRKLGIRTKTPSVPGISPVSLGVVRRTSKEENKAEDKSVESPDGSRSRKAEGMCRKEETGCKEEITERTQSECKLNTELTLTTSTLAAQGQTPTIHTVSCLVPNYSDSSCESEG.

The disordered stretch occupies residues 1 to 28 (MGERKGTNKYYPPDFDPAKHGSLNGYRN). A coiled-coil region spans residues 183–212 (NSLLRSKFREEKKQIKEEEERDQALLTKAS). A disordered region spans residues 275–331 (GIRTKTPSVPGISPVSLGVVRRTSKEENKAEDKSVESPDGSRSRKAEGMCRKEETGC). Residues 297–331 (TSKEENKAEDKSVESPDGSRSRKAEGMCRKEETGC) are compositionally biased toward basic and acidic residues.

This sequence belongs to the CWC16 family.

The protein resides in the nucleus. Functionally, may be involved in mRNA splicing. The protein is Probable splicing factor YJU2B (yju2b) of Xenopus laevis (African clawed frog).